The sequence spans 157 residues: Ribonuclease H (157 aa).

In terms of domain architecture, RNase H type-1 spans 3–144 (NSKTVHLYTD…CDELARDAAT (142 aa)). Residues D12, E50, D72, and D136 each contribute to the Mg(2+) site.

It belongs to the RNase H family. Monomer. Mg(2+) is required as a cofactor.

The protein localises to the cytoplasm. It carries out the reaction Endonucleolytic cleavage to 5'-phosphomonoester.. In terms of biological role, endonuclease that specifically degrades the RNA of RNA-DNA hybrids. The protein is Ribonuclease H of Idiomarina loihiensis (strain ATCC BAA-735 / DSM 15497 / L2-TR).